A 235-amino-acid polypeptide reads, in one-letter code: NAD-dependent protein deacylase (235 aa).

Residues 1 to 235 enclose the Deacetylase sirtuin-type domain; sequence MDLRLFKNIV…VPRFITQFLE (235 aa). 14–33 contacts NAD(+); that stretch reads GAGISAESGIRTFRDQDGLW. Positions 58 and 61 each coordinate substrate. 95-98 lines the NAD(+) pocket; sequence QNVD. His113 (proton acceptor) is an active-site residue. The Zn(2+) site is built by Cys121, Cys124, Cys140, and Cys143. NAD(+) contacts are provided by residues 180 to 182, 204 to 206, and Ala222; these read GTS and NLK.

The protein belongs to the sirtuin family. Class III subfamily. Requires Zn(2+) as cofactor.

The protein localises to the cytoplasm. It catalyses the reaction N(6)-acetyl-L-lysyl-[protein] + NAD(+) + H2O = 2''-O-acetyl-ADP-D-ribose + nicotinamide + L-lysyl-[protein]. It carries out the reaction N(6)-succinyl-L-lysyl-[protein] + NAD(+) + H2O = 2''-O-succinyl-ADP-D-ribose + nicotinamide + L-lysyl-[protein]. Functionally, NAD-dependent lysine deacetylase and desuccinylase that specifically removes acetyl and succinyl groups on target proteins. Modulates the activities of several proteins which are inactive in their acylated form. The protein is NAD-dependent protein deacylase of Bdellovibrio bacteriovorus (strain ATCC 15356 / DSM 50701 / NCIMB 9529 / HD100).